Reading from the N-terminus, the 435-residue chain is GTPase Der (435 aa).

EngA-type G domains are found at residues 3-167 and 176-351; these read NIVA…KDEG and PRIA…ENRG. GTP-binding positions include 9-16, 56-60, 119-122, 182-189, 229-233, and 294-297; these read GRPNVGKS, DTGGY, NKSD, GRPNAGKS, DTAGI, and NKWD. The region spanning 352–435 is the KH-like domain; it reads KRIPTSELND…VPISIVYRKK (84 aa).

It belongs to the TRAFAC class TrmE-Era-EngA-EngB-Septin-like GTPase superfamily. EngA (Der) GTPase family. In terms of assembly, associates with the 50S ribosomal subunit.

GTPase that plays an essential role in the late steps of ribosome biogenesis. The sequence is that of GTPase Der from Cytophaga hutchinsonii (strain ATCC 33406 / DSM 1761 / CIP 103989 / NBRC 15051 / NCIMB 9469 / D465).